Here is a 255-residue protein sequence, read N- to C-terminus: Tabinhibitin 2 (255 aa).

The first 23 residues, 1 to 23, serve as a signal peptide directing secretion; it reads MISILVSRFLLAALVLQYATIDA. Residues 32 to 34 carry the Cell attachment site motif; sequence RGD. In terms of domain architecture, SCP spans 67–211; the sequence is LSKINDVRDH…KARALLTCNF (145 aa).

Belongs to the CRISP family. In terms of tissue distribution, expressed in salivary glands.

The protein localises to the secreted. Inhibits platelet aggregation induced by all agonists tested (ADP, arachidonic acid, the thromboxane A2 analog U46619, thrombin, and snake venom snaclecs (TMVA that activates platelet through GPIB, and stejnulxin that specifically acts through GPVI (GP6))). May act by competing with fibrinogen for binding to glycoprotein IIb/IIIa (ITGA2B/ITGB3). This is Tabinhibitin 2 from Tabanus yao (Horsefly).